Here is a 203-residue protein sequence, read N- to C-terminus: uncharacterized protein (203 aa).

A signal peptide spans 1-31; that stretch reads MKKTFVKKAMLTTAAMTSAALLTFGPDAASA.

This is an uncharacterized protein from Bacillus subtilis (strain 168).